We begin with the raw amino-acid sequence, 166 residues long: Protein-export protein SecB (166 aa).

Belongs to the SecB family. In terms of assembly, homotetramer, a dimer of dimers. One homotetramer interacts with 1 SecA dimer.

Its subcellular location is the cytoplasm. One of the proteins required for the normal export of preproteins out of the cell cytoplasm. It is a molecular chaperone that binds to a subset of precursor proteins, maintaining them in a translocation-competent state. It also specifically binds to its receptor SecA. The chain is Protein-export protein SecB from Cereibacter sphaeroides (strain ATCC 17025 / ATH 2.4.3) (Rhodobacter sphaeroides).